Reading from the N-terminus, the 156-residue chain is Small ribosomal subunit protein uS7 (156 aa).

It belongs to the universal ribosomal protein uS7 family. In terms of assembly, part of the 30S ribosomal subunit. Contacts proteins S9 and S11.

One of the primary rRNA binding proteins, it binds directly to 16S rRNA where it nucleates assembly of the head domain of the 30S subunit. Is located at the subunit interface close to the decoding center, probably blocks exit of the E-site tRNA. This Acinetobacter baumannii (strain AB307-0294) protein is Small ribosomal subunit protein uS7.